The following is a 249-amino-acid chain: 23S rRNA (guanosine-2'-O-)-methyltransferase RlmB (249 aa).

Residues glycine 197, isoleucine 217, and leucine 226 each coordinate S-adenosyl-L-methionine.

Belongs to the class IV-like SAM-binding methyltransferase superfamily. RNA methyltransferase TrmH family. RlmB subfamily.

It localises to the cytoplasm. The catalysed reaction is guanosine(2251) in 23S rRNA + S-adenosyl-L-methionine = 2'-O-methylguanosine(2251) in 23S rRNA + S-adenosyl-L-homocysteine + H(+). Specifically methylates the ribose of guanosine 2251 in 23S rRNA. The polypeptide is 23S rRNA (guanosine-2'-O-)-methyltransferase RlmB (Ralstonia nicotianae (strain ATCC BAA-1114 / GMI1000) (Ralstonia solanacearum)).